The primary structure comprises 426 residues: Ubiquitin carboxyl-terminal hydrolase 46 (426 aa).

Residue glycine 2 is the site of N-myristoyl glycine attachment. The 380-residue stretch at 27–406 (YGLVNFGNTC…SAYILFYQAR (380 aa)) folds into the USP domain. The active-site Nucleophile is cysteine 36. Residues 162–181 (TAGLPRSDEKGTSERNGGIT) form a disordered region. Histidine 342 serves as the catalytic Proton acceptor.

The protein belongs to the peptidase C19 family. In terms of assembly, interacts with wdr-20 and wdr-48; the catalytic activity of usp-46 is increased in the presence of both wdr-20 and wdr-48. Interacts with glr-1; the interaction results in deubiquitination of glr-1. Expressed in a number of tissues including the nervous system, pharynx, body wall muscle, vulva muscle and intestine and is detected in many head and ventral cord neurons.

Its subcellular location is the perikaryon. It is found in the cytoplasm. The enzyme catalyses Thiol-dependent hydrolysis of ester, thioester, amide, peptide and isopeptide bonds formed by the C-terminal Gly of ubiquitin (a 76-residue protein attached to proteins as an intracellular targeting signal).. Its function is as follows. Regulates the abundance of the glr-1 glutamate receptor in the ventral nerve cord by promoting its deubiquitination and preventing its degradation in the lysosome. Contributes to the regulation of embryonic polarity. This is Ubiquitin carboxyl-terminal hydrolase 46 (usp-46) from Caenorhabditis elegans.